The primary structure comprises 763 residues: 5-methyltetrahydropteroyltriglutamate--homocysteine methyltransferase (763 aa).

5-methyltetrahydropteroyltri-L-glutamate contacts are provided by residues 16 to 19 and Lys-117; that span reads RELK. L-homocysteine contacts are provided by residues 440-442 and Glu-493; that span reads IGS. L-methionine is bound by residues 440 to 442 and Glu-493; that span reads IGS. 5-methyltetrahydropteroyltri-L-glutamate contacts are provided by residues 524–525 and Trp-570; that span reads RC. Asp-608 is a binding site for L-homocysteine. Asp-608 contacts L-methionine. Position 614 (Glu-614) interacts with 5-methyltetrahydropteroyltri-L-glutamate. The Zn(2+) site is built by His-650, Cys-652, and Glu-674. His-703 (proton donor) is an active-site residue. Cys-735 is a binding site for Zn(2+).

Belongs to the vitamin-B12 independent methionine synthase family. The cofactor is Zn(2+).

The enzyme catalyses 5-methyltetrahydropteroyltri-L-glutamate + L-homocysteine = tetrahydropteroyltri-L-glutamate + L-methionine. Its pathway is amino-acid biosynthesis; L-methionine biosynthesis via de novo pathway; L-methionine from L-homocysteine (MetE route): step 1/1. Functionally, catalyzes the transfer of a methyl group from 5-methyltetrahydrofolate to homocysteine resulting in methionine formation. This is 5-methyltetrahydropteroyltriglutamate--homocysteine methyltransferase from Alcanivorax borkumensis (strain ATCC 700651 / DSM 11573 / NCIMB 13689 / SK2).